We begin with the raw amino-acid sequence, 168 residues long: RxLR effector protein CRE8 (168 aa).

Positions 1–23 (MRLPSILVVAASTLFLHYGYTSA) are cleaved as a signal peptide. The short motif at 54–69 (RFLRDGKIAEGDNEER) is the RxLR-dEER element.

The protein belongs to the RxLR effector family.

It localises to the secreted. It is found in the host cell. Effector that is involved in host plant infection. Contributes to virulence during the early infection stage, by inhibiting plant defense responses induced by both PAMP-triggered immunity (PTI) and effector-triggered immunity (ETI). The sequence is that of RxLR effector protein CRE8 from Phytophthora infestans (strain T30-4) (Potato late blight agent).